The chain runs to 263 residues: tRNA uridine(34) hydroxylase (263 aa).

In terms of domain architecture, Rhodanese spans 129 to 223 (EGREVVTLDT…YFEETDGAFY (95 aa)). Cys183 serves as the catalytic Cysteine persulfide intermediate.

The protein belongs to the TrhO family.

It catalyses the reaction uridine(34) in tRNA + AH2 + O2 = 5-hydroxyuridine(34) in tRNA + A + H2O. Its function is as follows. Catalyzes oxygen-dependent 5-hydroxyuridine (ho5U) modification at position 34 in tRNAs. In Delftia acidovorans (strain DSM 14801 / SPH-1), this protein is tRNA uridine(34) hydroxylase.